Reading from the N-terminus, the 224-residue chain is Cytidylate kinase (224 aa).

11–19 is an ATP binding site; it reads GPAAAGKST.

The protein belongs to the cytidylate kinase family. Type 1 subfamily.

Its subcellular location is the cytoplasm. It carries out the reaction CMP + ATP = CDP + ADP. The catalysed reaction is dCMP + ATP = dCDP + ADP. This Listeria welshimeri serovar 6b (strain ATCC 35897 / DSM 20650 / CCUG 15529 / CIP 8149 / NCTC 11857 / SLCC 5334 / V8) protein is Cytidylate kinase.